We begin with the raw amino-acid sequence, 89 residues long: Small ribosomal subunit protein bS20 (89 aa).

The interval 1 to 26 (MANSAQARKRARQADGQRSHNASLRS) is disordered.

This sequence belongs to the bacterial ribosomal protein bS20 family.

Binds directly to 16S ribosomal RNA. In Dechloromonas aromatica (strain RCB), this protein is Small ribosomal subunit protein bS20.